Consider the following 191-residue polypeptide: Adenine phosphoribosyltransferase (191 aa).

The protein belongs to the purine/pyrimidine phosphoribosyltransferase family. As to quaternary structure, homodimer.

It localises to the cytoplasm. The catalysed reaction is AMP + diphosphate = 5-phospho-alpha-D-ribose 1-diphosphate + adenine. Its pathway is purine metabolism; AMP biosynthesis via salvage pathway; AMP from adenine: step 1/1. In terms of biological role, catalyzes a salvage reaction resulting in the formation of AMP, that is energically less costly than de novo synthesis. This chain is Adenine phosphoribosyltransferase, found in Nocardia farcinica (strain IFM 10152).